A 427-amino-acid polypeptide reads, in one-letter code: MTEAMKITLSPQPADARWGEKATYSINNDGITLHLNGADDLGLIQRAARKIDGLGIKHVQLSGEGWDADRCWAFWQGYKAPKGIRKVEWPDLDDAQRQELDNRLMIIDWVRDTINAPAEELGPSQLAQRAVDLISNVAGDRVTYRITKGEDLREQGYMGLHTVGRGSERSPVLLALDYNPTGDKEAPVYACLVGKGITFDSGGYSIKQTAFMDSMKSDMGGAATVTGALAFAITRGLNKRVKLFLCCADNLISGNAFKLGDIITYRNGKKVEVMNTDAEGRLVLADGLIDASAQKPELIIDAATLTGAAKTALGNDYHALFSFDDALAGRLLASAAQENEPFWRLPLAEFHRNQLPSNFAELNNTGSAAYPAGASTAAGFLSHFVENYQQGWLHIDCSATYRKAPVEQWSAGATGLGVRTIANLLTA.

Mn(2+) is bound by residues Lys195 and Asp200. Lys207 is an active-site residue. Mn(2+) contacts are provided by Asp218, Asp277, and Glu279. Arg281 is an active-site residue.

The protein belongs to the peptidase M17 family. As to quaternary structure, homohexamer. Requires Mn(2+) as cofactor.

The protein resides in the cytoplasm. The enzyme catalyses Release of an N-terminal amino acid, Xaa, from a peptide or arylamide. Xaa is preferably Glu or Asp but may be other amino acids, including Leu, Met, His, Cys and Gln.. Probably plays an important role in intracellular peptide degradation. The chain is Peptidase B from Escherichia coli O127:H6 (strain E2348/69 / EPEC).